The primary structure comprises 1387 residues: Dicer-like protein 2-1 (1387 aa).

Residues M26–A205 enclose the Helicase ATP-binding domain. M39 to T46 is a binding site for ATP. Positions D146–H149 match the DEAH box motif. The Helicase C-terminal domain maps to K370–R535. One can recognise a Dicer dsRNA-binding fold domain in the interval A565–K659. 2 consecutive RNase III domains span residues A915 to G1055 and D1094 to H1277. Mg(2+)-binding residues include E1133, D1263, and E1266.

This sequence belongs to the helicase family. Dicer subfamily. Mg(2+) serves as cofactor. Requires Mn(2+) as cofactor.

Dicer-like endonuclease involved in cleaving double-stranded RNA in the RNA interference (RNAi) pathway. Produces 21 to 25 bp dsRNAs (siRNAs) which target the selective destruction of homologous RNAs leading to sequence-specific suppression of gene expression, called post-transcriptional gene silencing (PTGS). Part of a broad host defense response against viral infection and transposons. In Aspergillus niger (strain ATCC MYA-4892 / CBS 513.88 / FGSC A1513), this protein is Dicer-like protein 2-1 (dcl2-1).